Consider the following 361-residue polypeptide: Fructose-bisphosphate aldolase (361 aa).

A D-glyceraldehyde 3-phosphate-binding site is contributed by Ser-63. The Proton donor role is filled by Asp-110. The Zn(2+) site is built by His-111, Asp-145, Glu-175, and His-227. Dihydroxyacetone phosphate is bound at residue Gly-228. His-266 lines the Zn(2+) pocket. Dihydroxyacetone phosphate contacts are provided by residues 267-269 (GGS) and 288-291 (NLDT).

This sequence belongs to the class II fructose-bisphosphate aldolase family. Homodimer. It depends on Zn(2+) as a cofactor.

The enzyme catalyses beta-D-fructose 1,6-bisphosphate = D-glyceraldehyde 3-phosphate + dihydroxyacetone phosphate. Its pathway is carbohydrate degradation; glycolysis; D-glyceraldehyde 3-phosphate and glycerone phosphate from D-glucose: step 4/4. In terms of biological role, catalyzes the aldol condensation of dihydroxyacetone phosphate (DHAP or glycerone-phosphate) with glyceraldehyde 3-phosphate (G3P) to form fructose 1,6-bisphosphate (FBP) in gluconeogenesis and the reverse reaction in glycolysis. The sequence is that of Fructose-bisphosphate aldolase (FBA1) from Kluyveromyces lactis (strain ATCC 8585 / CBS 2359 / DSM 70799 / NBRC 1267 / NRRL Y-1140 / WM37) (Yeast).